The chain runs to 444 residues: Alpha-1,3-mannosyl-glycoprotein 2-beta-N-acetylglucosaminyltransferase (444 aa).

The Cytoplasmic segment spans residues 1-6 (MARISC). The chain crosses the membrane as a helical; Signal-anchor for type II membrane protein span at residues 7–24 (DLRFLLIPAAFMFIYIQM). Residues 25–444 (RLFQTQSQYA…SVMQLGIRNS (420 aa)) lie on the Lumenal side of the membrane. Residues 61-92 (KQSRIVALEDMKNRQDEELVQLKDLIQTFEKK) are a coiled coil. Arg115, Asp144, His188, and Asp210 together coordinate substrate. Asp211 provides a ligand contact to Mn(2+). Asp287 acts as the Proton acceptor in catalysis. Ser318 is a substrate binding site. Asn351 carries N-linked (GlcNAc...) asparagine glycosylation.

It belongs to the glycosyltransferase 13 family. Mn(2+) is required as a cofactor. Post-translationally, glycosylated. In terms of tissue distribution, expressed in roots, stems, leaves and flowers.

It is found in the golgi apparatus membrane. It catalyses the reaction N(4)-(alpha-D-Man-(1-&gt;3)-[alpha-D-Man-(1-&gt;3)-[alpha-D-Man-(1-&gt;6)]-alpha-D-Man-(1-&gt;6)]-beta-D-Man-(1-&gt;4)-beta-D-GlcNAc-(1-&gt;4)-beta-D-GlcNAc)-L-asparaginyl-[protein] (N-glucan mannose isomer 5A1,2) + UDP-N-acetyl-alpha-D-glucosamine = N(4)-{beta-D-GlcNAc-(1-&gt;2)-alpha-D-Man-(1-&gt;3)-[alpha-D-Man-(1-&gt;3)-[alpha-D-Man-(1-&gt;6)]-alpha-D-Man-(1-&gt;6)]-beta-D-Man-(1-&gt;4)-beta-D-GlcNAc-(1-&gt;4)-beta-D-GlcNAc}-L-asparaginyl-[protein] + UDP + H(+). It functions in the pathway protein modification; protein glycosylation. In terms of biological role, initiates complex N-linked carbohydrate formation. Essential for the conversion of high-mannose to hybrid and complex N-glycans. Required for normal root growth and morphology. This chain is Alpha-1,3-mannosyl-glycoprotein 2-beta-N-acetylglucosaminyltransferase, found in Arabidopsis thaliana (Mouse-ear cress).